Consider the following 442-residue polypeptide: F-box only protein 39 (442 aa).

Positions 16-61 constitute an F-box domain; that stretch reads WAFLPDLCLCRVFWWLGDRDRSRAALVCRKWNQMMYSAELWRYRTI.

Directly interacts with SKP1 and CUL1.

Functionally, substrate-recognition component of the SCF (SKP1-CUL1-F-box protein)-type E3 ubiquitin ligase complex. This Homo sapiens (Human) protein is F-box only protein 39 (FBXO39).